A 438-amino-acid chain; its full sequence is Exosome complex component RRP45B (438 aa).

Disordered regions lie at residues 293–322 (PTLA…RAAE) and 334–438 (STEE…KNKS). Composition is skewed to basic and acidic residues over residues 307–322 (VKEE…RAAE) and 334–347 (STEE…EEAA). The segment covering 380–394 (TKSSSTKKMNGSGNA) has biased composition (polar residues). Residues 410–429 (LGKKDTKHKDGEMTLKDAVK) show a composition bias toward basic and acidic residues.

This sequence belongs to the RNase PH family.

It is found in the cytoplasm. It localises to the nucleus. Its function is as follows. Probable 3'-&gt;5' exoribonuclease involved in the regulation of cuticular wax biosynthesis by controlling the expression of CER3. May act by degrading a specific mRNA species encoding a negative regulator of CER3 transcription. Can perform exosomal functions and complement the yeast rrp45 null mutant. This chain is Exosome complex component RRP45B, found in Arabidopsis thaliana (Mouse-ear cress).